The following is a 233-amino-acid chain: Probable septum site-determining protein MinC (233 aa).

The protein belongs to the MinC family. As to quaternary structure, interacts with MinD and FtsZ.

Its function is as follows. Cell division inhibitor that blocks the formation of polar Z ring septums. Rapidly oscillates between the poles of the cell to destabilize FtsZ filaments that have formed before they mature into polar Z rings. Prevents FtsZ polymerization. This chain is Probable septum site-determining protein MinC, found in Proteus mirabilis (strain HI4320).